Reading from the N-terminus, the 660-residue chain is Acetyl-coenzyme A synthetase (660 aa).

CoA contacts are provided by residues 197-200 (RGGK) and Thr-317. ATP contacts are provided by residues 397–399 (GEP), 421–426 (DTFWQT), Asp-512, and Arg-528. Ser-536 lines the CoA pocket. An ATP-binding site is contributed by Arg-539. The Mg(2+) site is built by Val-550 and Val-555. Lys-625 is subject to N6-acetyllysine.

It belongs to the ATP-dependent AMP-binding enzyme family. It depends on Mg(2+) as a cofactor. Acetylated. Deacetylation by the SIR2-homolog deacetylase activates the enzyme.

It catalyses the reaction acetate + ATP + CoA = acetyl-CoA + AMP + diphosphate. In terms of biological role, catalyzes the conversion of acetate into acetyl-CoA (AcCoA), an essential intermediate at the junction of anabolic and catabolic pathways. AcsA undergoes a two-step reaction. In the first half reaction, AcsA combines acetate with ATP to form acetyl-adenylate (AcAMP) intermediate. In the second half reaction, it can then transfer the acetyl group from AcAMP to the sulfhydryl group of CoA, forming the product AcCoA. This Cupriavidus metallidurans (strain ATCC 43123 / DSM 2839 / NBRC 102507 / CH34) (Ralstonia metallidurans) protein is Acetyl-coenzyme A synthetase.